Consider the following 381-residue polypeptide: MESIGVVAPHTMHFAEPLRLQSGSVLGNYQLVVETYGELNAVRSNAVLVCHALNASHHVAGVYADDPRSTGWWDNMVGPGKPLDTNRFFVIGVNNLGSCFGSTGPMNIDPATGTPYGARFPVVTVEDWVHAQARVADALGIERFAAVMGGSLGGMQALAWSLLYPERVAHCIDIASTPKLSAQNIAFNEVARSAILSDPDFHGGDYYAHGVKPRRGLRVARMIGHITYLSDDDMAEKFGRALRRADGALDAYNFNFDVEFEVESYLRYQGDKFADYFDANTYLLITRALDYFDPAKAFNGDLSAALAHTKAKYLIASFMTDWRFAPARSREIVKALLDNRRSVSYAEIDAPHGHDAFLLDDARYHNLVRAYYERIAEEVGA.

Residues 45-360 enclose the AB hydrolase-1 domain; the sequence is NAVLVCHALN…PHGHDAFLLD (316 aa). S151 acts as the Nucleophile in catalysis. R221 is a substrate binding site. Active-site residues include D321 and H354. Substrate is bound at residue D355.

This sequence belongs to the AB hydrolase superfamily. MetX family. In terms of assembly, homodimer.

It localises to the cytoplasm. The enzyme catalyses L-homoserine + succinyl-CoA = O-succinyl-L-homoserine + CoA. The protein operates within amino-acid biosynthesis; L-methionine biosynthesis via de novo pathway; O-succinyl-L-homoserine from L-homoserine: step 1/1. Its function is as follows. Transfers a succinyl group from succinyl-CoA to L-homoserine, forming succinyl-L-homoserine. This Burkholderia pseudomallei (strain 1710b) protein is Homoserine O-succinyltransferase.